A 308-amino-acid polypeptide reads, in one-letter code: Aspartate carbamoyltransferase catalytic subunit (308 aa).

Carbamoyl phosphate contacts are provided by arginine 57 and threonine 58. Lysine 86 lines the L-aspartate pocket. Arginine 107, histidine 135, and glutamine 138 together coordinate carbamoyl phosphate. 2 residues coordinate L-aspartate: arginine 168 and arginine 228. Carbamoyl phosphate is bound by residues leucine 267 and proline 268.

This sequence belongs to the aspartate/ornithine carbamoyltransferase superfamily. ATCase family. Heterododecamer (2C3:3R2) of six catalytic PyrB chains organized as two trimers (C3), and six regulatory PyrI chains organized as three dimers (R2).

It catalyses the reaction carbamoyl phosphate + L-aspartate = N-carbamoyl-L-aspartate + phosphate + H(+). It participates in pyrimidine metabolism; UMP biosynthesis via de novo pathway; (S)-dihydroorotate from bicarbonate: step 2/3. Catalyzes the condensation of carbamoyl phosphate and aspartate to form carbamoyl aspartate and inorganic phosphate, the committed step in the de novo pyrimidine nucleotide biosynthesis pathway. The chain is Aspartate carbamoyltransferase catalytic subunit from Leptospira interrogans serogroup Icterohaemorrhagiae serovar Lai (strain 56601).